Consider the following 116-residue polypeptide: Somatostatin (116 aa).

The signal sequence occupies residues 1–24 (MLSCRLQCALAALSIVLALGCVTG). Positions 25–88 (APSDPRLRQF…QDEMRLELQR (64 aa)) are excised as a propeptide. Position 43 is an alanine amide (Ala43). A disordered region spans residues 62 to 82 (QTENDALEPEDLSQAAEQDEM). Cys105 and Cys116 are joined by a disulfide.

This sequence belongs to the somatostatin family. In terms of processing, C-terminal amidation of the neuronostatin peptide is required for its biological activity, including for the regulation of mean arterial pressure.

The protein resides in the secreted. Its function is as follows. Inhibits the secretion of pituitary hormones, including that of growth hormone/somatotropin (GH1), PRL, ACTH, luteinizing hormone (LH) and TSH. Also impairs ghrelin- and GnRH-stimulated secretion of GH1 and LH; the inhibition of ghrelin-stimulated secretion of GH1 can be further increased by neuronostatin. May enhance low-glucose-induced glucagon release by pancreatic alpha cells. This effect may be mediated by binding to GPR107 and PKA activation. May regulate cardiac contractile function. May compromise cardiomyocyte viability. In the central nervous system, may impair memory retention and may affect hippocampal excitability. May also have anxiolytic and anorexigenic effects. May play a role in arterial pressure regulation. May inhibit basal, but not ghrelin- or GnRH-stimulated secretion of GH1 or LH, but does not affect the release of other pituitary hormones, including PRL, ACTH, FSH or TSH. Potentiates inhibitory action of somatostatin on ghrelin-stimulated secretion of GH1, but not that on GnRH-stimulated secretion of LH. This chain is Somatostatin (SST), found in Homo sapiens (Human).